The following is a 278-amino-acid chain: Coiled-coil domain-containing protein 121 (278 aa).

Coiled-coil stretches lie at residues 1–30 (MTDLNKHIKQAQTQRKQLLEESRELHREKL) and 105–243 (QAMR…LIQA). A disordered region spans residues 253 to 278 (QCLNRQDVPKTTPSLPQGTKSRINPK).

The protein is Coiled-coil domain-containing protein 121 (CCDC121) of Homo sapiens (Human).